We begin with the raw amino-acid sequence, 787 residues long: GPI ethanolamine phosphate transferase 2 (787 aa).

Residues Asn-33, Asn-185, and Asn-397 are each glycosylated (N-linked (GlcNAc...) asparagine). A run of 3 helical transmembrane segments spans residues 400–420 (FLTY…VWNF), 426–446 (YIEH…SSFI), and 455–475 (WITI…LVVL). Asn-485 carries an N-linked (GlcNAc...) asparagine glycan. 2 consecutive transmembrane segments (helical) span residues 504-524 (HTSV…FPFL) and 536-556 (LLSV…FAIV). Asn-581 carries N-linked (GlcNAc...) asparagine glycosylation. A helical membrane pass occupies residues 591–611 (LVPIARIFFQICGVSIIILLF). Residue Asn-617 is glycosylated (N-linked (GlcNAc...) asparagine). Residues 629–651 (VIKFVLLLQTSSANIPLFLIFEI) traverse the membrane as a helical segment. The N-linked (GlcNAc...) asparagine glycan is linked to Asn-669. 4 helical membrane-spanning segments follow: residues 671 to 693 (TFFQ…YNGV), 699 to 719 (IYVV…YWAL), 740 to 760 (GTCL…WSVF), and 767 to 787 (YAAW…LGVL).

The protein belongs to the PIGG/PIGN/PIGO family. PIGG subfamily.

The protein resides in the endoplasmic reticulum membrane. It participates in glycolipid biosynthesis; glycosylphosphatidylinositol-anchor biosynthesis. Functionally, ethanolamine phosphate transferase involved in glycosylphosphatidylinositol-anchor biosynthesis. Transfers ethanolamine phosphate to the GPI second mannose. This is GPI ethanolamine phosphate transferase 2 (LAS21) from Kluyveromyces lactis (strain ATCC 8585 / CBS 2359 / DSM 70799 / NBRC 1267 / NRRL Y-1140 / WM37) (Yeast).